Reading from the N-terminus, the 153-residue chain is Hemoglobin-3 (153 aa).

An N-acetylserine modification is found at Ser2. Positions 4-150 (GLTGPQKAAL…ICRVQGDFMK (147 aa)) constitute a Globin domain. Residue His99 participates in heme b binding.

This sequence belongs to the globin family. In terms of assembly, homotetramer.

It localises to the cytoplasm. In Phacoides pectinatus (Thick lucine), this protein is Hemoglobin-3.